An 88-amino-acid chain; its full sequence is HssA/B-like protein 11 (88 aa).

This sequence belongs to the hssA/B family.

The sequence is that of HssA/B-like protein 11 (hssl11) from Dictyostelium discoideum (Social amoeba).